A 298-amino-acid polypeptide reads, in one-letter code: ATP phosphoribosyltransferase (298 aa).

It belongs to the ATP phosphoribosyltransferase family. Long subfamily. It depends on Mg(2+) as a cofactor.

It localises to the cytoplasm. It catalyses the reaction 1-(5-phospho-beta-D-ribosyl)-ATP + diphosphate = 5-phospho-alpha-D-ribose 1-diphosphate + ATP. It participates in amino-acid biosynthesis; L-histidine biosynthesis; L-histidine from 5-phospho-alpha-D-ribose 1-diphosphate: step 1/9. With respect to regulation, feedback inhibited by histidine. Functionally, catalyzes the condensation of ATP and 5-phosphoribose 1-diphosphate to form N'-(5'-phosphoribosyl)-ATP (PR-ATP). Has a crucial role in the pathway because the rate of histidine biosynthesis seems to be controlled primarily by regulation of HisG enzymatic activity. The chain is ATP phosphoribosyltransferase from Aliivibrio fischeri (strain MJ11) (Vibrio fischeri).